Consider the following 431-residue polypeptide: Serine hydroxymethyltransferase (431 aa).

Residue A121–V123 coordinates (6S)-5,6,7,8-tetrahydrofolate. K227 is modified (N6-(pyridoxal phosphate)lysine).

This sequence belongs to the SHMT family. In terms of assembly, homodimer. It depends on pyridoxal 5'-phosphate as a cofactor.

It is found in the cytoplasm. It functions in the pathway amino-acid biosynthesis; glycine biosynthesis; glycine from L-serine: step 1/1. Functionally, catalyzes the reversible interconversion of serine and glycine with a modified folate serving as the one-carbon carrier. Also exhibits a pteridine-independent aldolase activity toward beta-hydroxyamino acids, producing glycine and aldehydes, via a retro-aldol mechanism. The polypeptide is Serine hydroxymethyltransferase (Metallosphaera sedula (strain ATCC 51363 / DSM 5348 / JCM 9185 / NBRC 15509 / TH2)).